The primary structure comprises 178 residues: Bifunctional protein PyrR (178 aa).

Residues 97-109 (VVLVDDVLYTGRT) carry the PRPP-binding motif.

It belongs to the purine/pyrimidine phosphoribosyltransferase family. PyrR subfamily.

The enzyme catalyses UMP + diphosphate = 5-phospho-alpha-D-ribose 1-diphosphate + uracil. Regulates the transcription of the pyrimidine nucleotide (pyr) operon in response to exogenous pyrimidines. Its function is as follows. Also displays a weak uracil phosphoribosyltransferase activity which is not physiologically significant. This chain is Bifunctional protein PyrR, found in Herpetosiphon aurantiacus (strain ATCC 23779 / DSM 785 / 114-95).